Reading from the N-terminus, the 424-residue chain is DNA primase DnaG (424 aa).

A Toprim domain is found at 171 to 245 (DDIIVVEGRA…DVDFVARAPP (75 aa)). 3 residues coordinate Mg(2+): glutamate 177, aspartate 219, and aspartate 221.

Belongs to the archaeal DnaG primase family. Forms a ternary complex with MCM helicase and DNA. Requires Mg(2+) as cofactor.

The catalysed reaction is ssDNA + n NTP = ssDNA/pppN(pN)n-1 hybrid + (n-1) diphosphate.. Its function is as follows. RNA polymerase that catalyzes the synthesis of short RNA molecules used as primers for DNA polymerase during DNA replication. The polypeptide is DNA primase DnaG (Methanocaldococcus jannaschii (strain ATCC 43067 / DSM 2661 / JAL-1 / JCM 10045 / NBRC 100440) (Methanococcus jannaschii)).